We begin with the raw amino-acid sequence, 261 residues long: Sulfur carrier protein FdhD (261 aa).

Cys105 (cysteine persulfide intermediate) is an active-site residue. Residue 245–250 (FIRGDR) participates in Mo-bis(molybdopterin guanine dinucleotide) binding.

This sequence belongs to the FdhD family.

The protein localises to the cytoplasm. Its function is as follows. Required for formate dehydrogenase (FDH) activity. Acts as a sulfur carrier protein that transfers sulfur from IscS to the molybdenum cofactor prior to its insertion into FDH. The polypeptide is Sulfur carrier protein FdhD (Listeria monocytogenes serovar 1/2a (strain ATCC BAA-679 / EGD-e)).